A 207-amino-acid polypeptide reads, in one-letter code: Ribosomal RNA small subunit methyltransferase G (207 aa).

S-adenosyl-L-methionine contacts are provided by residues Gly74, Leu79, 125 to 126 (VE), and Arg140.

The protein belongs to the methyltransferase superfamily. RNA methyltransferase RsmG family.

Its subcellular location is the cytoplasm. It catalyses the reaction guanosine(527) in 16S rRNA + S-adenosyl-L-methionine = N(7)-methylguanosine(527) in 16S rRNA + S-adenosyl-L-homocysteine. Specifically methylates the N7 position of guanine in position 527 of 16S rRNA. The protein is Ribosomal RNA small subunit methyltransferase G of Shewanella pealeana (strain ATCC 700345 / ANG-SQ1).